Here is a 604-residue protein sequence, read N- to C-terminus: Elongation factor 4 (604 aa).

Residues 7 to 189 (SRIRNFSIIA…SIVHLVPPPD (183 aa)) enclose the tr-type G domain. GTP is bound by residues 19–24 (DHGKST) and 136–139 (NKID).

The protein belongs to the TRAFAC class translation factor GTPase superfamily. Classic translation factor GTPase family. LepA subfamily.

The protein localises to the cell inner membrane. It carries out the reaction GTP + H2O = GDP + phosphate + H(+). Its function is as follows. Required for accurate and efficient protein synthesis under certain stress conditions. May act as a fidelity factor of the translation reaction, by catalyzing a one-codon backward translocation of tRNAs on improperly translocated ribosomes. Back-translocation proceeds from a post-translocation (POST) complex to a pre-translocation (PRE) complex, thus giving elongation factor G a second chance to translocate the tRNAs correctly. Binds to ribosomes in a GTP-dependent manner. The protein is Elongation factor 4 of Gloeothece citriformis (strain PCC 7424) (Cyanothece sp. (strain PCC 7424)).